We begin with the raw amino-acid sequence, 322 residues long: Sideroflexin-1 (322 aa).

Ser-2 is modified (N-acetylserine). The Mitochondrial matrix portion of the chain corresponds to 2–102 (SGEVPPNINI…MSAQVPMNMT (101 aa)). Residues 103-120 (ITGCMMTFYRTTPAVLFW) form a helical membrane-spanning segment. At 121–146 (QWINQSFNAVVNYTNRSGDAPLTVNE) the chain is on the mitochondrial intermembrane side. Residues 147-167 (LGTAYVSATTGAVATALGLNA) traverse the membrane as a helical segment. At 168 to 174 (LTKRVSP) the chain is on the mitochondrial matrix side. Residues 175-195 (LIGRFVPFAAVAAANCINIPL) traverse the membrane as a helical segment. Residues 196–228 (MRQRELKVGIPVTDENGTRLGESTNAAKQAITQ) lie on the Mitochondrial intermembrane side of the membrane. Residues 229–249 (VVISRILMAAPGMAIPPFIMN) traverse the membrane as a helical segment. Residues 250–266 (TLEKKAFLKRFPWMSAP) lie on the Mitochondrial matrix side of the membrane. A helical transmembrane segment spans residues 267–287 (IQVTLVGFCLVFATPLCCALF). Residues 288–322 (PQKSSMSVTSLEDELQASIQRTHPEIRRVYFNKGL) lie on the Mitochondrial intermembrane side of the membrane.

It belongs to the sideroflexin family. As to expression, widely expressed, with highest expression in kidney and liver.

The protein resides in the mitochondrion inner membrane. It catalyses the reaction L-serine(in) = L-serine(out). It carries out the reaction L-alanine(in) = L-alanine(out). The catalysed reaction is L-cysteine(in) = L-cysteine(out). Its function is as follows. Amino acid transporter importing serine, an essential substrate of the mitochondrial branch of the one-carbon pathway, into mitochondria. Mitochondrial serine is then converted to glycine and formate, which exits to the cytosol where it is used to generate the charged folates that serve as one-carbon donors. May also transport other amino acids including alanine and cysteine. The polypeptide is Sideroflexin-1 (Mus musculus (Mouse)).